The primary structure comprises 372 residues: NAD(P)H-quinone oxidoreductase subunit 1 (372 aa).

8 consecutive transmembrane segments (helical) span residues 27 to 47, 97 to 117, 128 to 148, 166 to 186, 204 to 224, 249 to 269, 308 to 328, and 351 to 371; these read AIWM…GVLV, WLFT…FLIV, VGMG…GLLM, AAQS…IAMM, ILGW…IAAL, YSGM…ILSS, SLGI…AILL, and VGLV…FAFG.

Belongs to the complex I subunit 1 family. As to quaternary structure, NDH-1 is composed of at least 11 different subunits.

It is found in the cellular thylakoid membrane. The catalysed reaction is a plastoquinone + NADH + (n+1) H(+)(in) = a plastoquinol + NAD(+) + n H(+)(out). It carries out the reaction a plastoquinone + NADPH + (n+1) H(+)(in) = a plastoquinol + NADP(+) + n H(+)(out). Its function is as follows. NDH-1 shuttles electrons from an unknown electron donor, via FMN and iron-sulfur (Fe-S) centers, to quinones in the respiratory and/or the photosynthetic chain. The immediate electron acceptor for the enzyme in this species is believed to be plastoquinone. Couples the redox reaction to proton translocation, and thus conserves the redox energy in a proton gradient. This chain is NAD(P)H-quinone oxidoreductase subunit 1, found in Nostoc punctiforme (strain ATCC 29133 / PCC 73102).